The primary structure comprises 441 residues: Ribulose bisphosphate carboxylase/oxygenase activase, chloroplastic (441 aa).

167 to 174 lines the ATP pocket; that stretch reads VWGGKGQG.

The protein belongs to the RuBisCO activase family.

The protein resides in the plastid. It localises to the chloroplast stroma. In terms of biological role, activation of RuBisCO (ribulose-1,5-bisphosphate carboxylase/oxygenase; EC 4.1.1.39) involves the ATP-dependent carboxylation of the epsilon-amino group of lysine leading to a carbamate structure. The chain is Ribulose bisphosphate carboxylase/oxygenase activase, chloroplastic (RCA1) from Phaseolus vulgaris (Kidney bean).